A 141-amino-acid polypeptide reads, in one-letter code: ATP synthase epsilon chain (141 aa).

The protein belongs to the ATPase epsilon chain family. In terms of assembly, F-type ATPases have 2 components, CF(1) - the catalytic core - and CF(0) - the membrane proton channel. CF(1) has five subunits: alpha(3), beta(3), gamma(1), delta(1), epsilon(1). CF(0) has three main subunits: a, b and c.

The protein resides in the cell inner membrane. Produces ATP from ADP in the presence of a proton gradient across the membrane. The polypeptide is ATP synthase epsilon chain (Paraburkholderia phymatum (strain DSM 17167 / CIP 108236 / LMG 21445 / STM815) (Burkholderia phymatum)).